A 349-amino-acid polypeptide reads, in one-letter code: Leucine-rich repeat-containing protein 58 (349 aa).

LRR repeat units follow at residues 14–34 (NLTH…NKRK), 35–56 (DVQQ…VNSF), 58–80 (HLHL…LGLT), 81–102 (KLKT…KELG), 105–125 (RLEV…QFLQ), 128–149 (TLKS…IENL), 151–173 (SLEF…ANLP), 174–195 (YLSY…LAQV), 197–217 (SLRS…ILSL), and 219–239 (QLQE…RDLT).

The protein is Leucine-rich repeat-containing protein 58 (lrrc58) of Xenopus tropicalis (Western clawed frog).